We begin with the raw amino-acid sequence, 156 residues long: ATP synthase subunit b (156 aa).

Residues 7–27 (LFAQMVVFLILAWFTMKFVWP) form a helical membrane-spanning segment.

It belongs to the ATPase B chain family. As to quaternary structure, F-type ATPases have 2 components, F(1) - the catalytic core - and F(0) - the membrane proton channel. F(1) has five subunits: alpha(3), beta(3), gamma(1), delta(1), epsilon(1). F(0) has three main subunits: a(1), b(2) and c(10-14). The alpha and beta chains form an alternating ring which encloses part of the gamma chain. F(1) is attached to F(0) by a central stalk formed by the gamma and epsilon chains, while a peripheral stalk is formed by the delta and b chains.

The protein localises to the cell inner membrane. Its function is as follows. F(1)F(0) ATP synthase produces ATP from ADP in the presence of a proton or sodium gradient. F-type ATPases consist of two structural domains, F(1) containing the extramembraneous catalytic core and F(0) containing the membrane proton channel, linked together by a central stalk and a peripheral stalk. During catalysis, ATP synthesis in the catalytic domain of F(1) is coupled via a rotary mechanism of the central stalk subunits to proton translocation. Component of the F(0) channel, it forms part of the peripheral stalk, linking F(1) to F(0). The polypeptide is ATP synthase subunit b (Paraburkholderia phytofirmans (strain DSM 17436 / LMG 22146 / PsJN) (Burkholderia phytofirmans)).